The following is a 135-amino-acid chain: Small ribosomal subunit protein bS6 (135 aa).

The tract at residues 98 to 135 (EASPMAKAKDERDARRAAISERSSEADEVEENAEESAE) is disordered. A compositionally biased stretch (basic and acidic residues) spans 104–122 (KAKDERDARRAAISERSSE). Positions 123 to 135 (ADEVEENAEESAE) are enriched in acidic residues.

The protein belongs to the bacterial ribosomal protein bS6 family.

Functionally, binds together with bS18 to 16S ribosomal RNA. This Shewanella amazonensis (strain ATCC BAA-1098 / SB2B) protein is Small ribosomal subunit protein bS6.